The sequence spans 107 residues: Nucleoid-associated protein Daro_0807 (107 aa).

The protein belongs to the YbaB/EbfC family. Homodimer.

The protein resides in the cytoplasm. It localises to the nucleoid. In terms of biological role, binds to DNA and alters its conformation. May be involved in regulation of gene expression, nucleoid organization and DNA protection. This Dechloromonas aromatica (strain RCB) protein is Nucleoid-associated protein Daro_0807.